We begin with the raw amino-acid sequence, 69 residues long: MSFNLRNAIMANIQGSSQQEVEATIVDAMESGEEKMLPGLGVLFEVYWKHADESQKDELCAEISKGLNE.

It belongs to the SspI family.

The protein resides in the spore core. This chain is Small, acid-soluble spore protein I, found in Shouchella clausii (strain KSM-K16) (Alkalihalobacillus clausii).